Reading from the N-terminus, the 219-residue chain is Leukocyte surface antigen CD53 (219 aa).

Residues 1-11 (MGMSSLKLLKY) lie on the Cytoplasmic side of the membrane. The helical transmembrane segment at 12–32 (VLFIFNLLFWVCGCCILGFGI) threads the bilayer. The Extracellular segment spans residues 33–54 (YFLVQNTYGVLFRNLPFLTLGN). The helical transmembrane segment at 55–69 (ILVIVGSIIMVVAFL) threads the bilayer. Residues 70 to 80 (GCMGSIKENKC) lie on the Cytoplasmic side of the membrane. A helical transmembrane segment spans residues 81–106 (LLMSFFVLLLIILLAEVTIAILLFVY). The Extracellular segment spans residues 107–181 (EQKLNTLVAE…NKAKSWFHSN (75 aa)). Residues Asn119, Asn129, and Asn148 are each glycosylated (N-linked (GlcNAc...) asparagine). Residues 182-206 (FLYIGIITICVCVIQVLGMSFALTL) traverse the membrane as a helical segment. The Cytoplasmic portion of the chain corresponds to 207–219 (NCQIDKTSQALGL).

Belongs to the tetraspanin (TM4SF) family. In terms of assembly, interacts with SCIMP. Interacts with CD45/PTPRC. Interacts with IL7R. Interacts with RBL2 and PPP2CA.

It localises to the cell membrane. It is found in the cell junction. The protein localises to the membrane. Structural component of specialized membrane microdomains known as tetraspanin-enriched microdomains (TERMs), which act as platforms for receptor clustering and signaling. Participates thereby in diverse biological functions such as cell signal transduction, adhesion, migration and protein trafficking. Plays a role in the activation of monocytes and B-cells. Acts as an essential regulator of B-cell development by promoting interleukin-7 receptor/IL7R signaling. Also promotes, in B-cells, the BCR signaling by recruiting PKC to the plasma membrane in order to phosphorylate its substrates. Plays an essential role in lymphocyte homing to lymph nodes by stabilizing L-selectin/SELL cell surface expression. Also mediates metabolic and inflammatory functions in hepatocytes and adipose tissue by promoting TNF-alpha and LPS signaling independent of the immune compartment. Protects hematopoietic stem cell function in response to stress by facilitating DREAM complex activity through association with p130/RBL2 and its phosphatase PP2A. The polypeptide is Leukocyte surface antigen CD53 (Cd53) (Mus musculus (Mouse)).